The chain runs to 366 residues: Aldo-keto reductase AFTS1 (366 aa).

Residue Asp75 coordinates NADP(+). Residue Tyr80 is the Proton donor of the active site. His172 is a binding site for substrate. NADP(+) contacts are provided by residues 202 to 203 (SS), Gln228, 257 to 267 (GSLASGRLARP), and 329 to 337 (SSVERIDEA).

This sequence belongs to the aldo/keto reductase family.

It functions in the pathway mycotoxin biosynthesis. Aldo-keto reductase; part of the gene clusters that mediate the biosynthesis of the host-selective toxins (HSTs) AF-toxins responsible for Alternaria black spot of strawberry disease by the strawberry pathotype. AF-toxin I and III are valine derivatives of 2,3-dyhydroxy-isovaleric acid and 2-hydroxy-isovaleric acid respectively, while AF II is an isoleucine derivative of 2-hydroxy-valeric acid. These derivatives are bound to a 9,10-epoxy-8-hydroxy-9-methyl-decatrienoic acid (EDA) moiety. On cellular level, AF-toxins affect plasma membrane of susceptible cells and cause a sudden increase in loss of K(+) after a few minutes of toxin treatment. The aldo-keto reductase AFTS1 catalyzes the conversion of 2-keto-isovaleric acid (2-KIV) to 2-hydroxy-isovaleric acid (2-HIV) by reduction of its ketone to an alcohol. The acyl-CoA ligase AFT1, the hydrolase AFT2 and the enoyl-CoA hydratases AFT3 and AFT6, but also the polyketide synthase AFT9, the acyl-CoA dehydrogenase AFT10, the cytochrome P450 monooxygenase AFT11 and the oxidoreductase AFT12 are all involved in the biosynthesis of the AK-, AF- and ACT-toxin common EDA structural moiety. The exact function of each enzyme, and of additional enzymes identified within the AF-toxin clusters have still to be determined. The sequence is that of Aldo-keto reductase AFTS1 from Alternaria alternata (Alternaria rot fungus).